Reading from the N-terminus, the 384-residue chain is Putative ankyrin repeat protein L72 (384 aa).

7 ANK repeats span residues 88-117 (ADMCIIGDIMNFYDINTIRYLIDNGANIKN), 119-146 (GNLLCQASQLGCIDIVKLLVKTSEKEFS), 171-200 (DHNVCILIAIVYKHIDVVKYFISIGEILSV), 202-231 (DDSLYFKLACDTGCLNIIKYLLEIGFDIES), 233-261 (NNYCLMISTINGRNDIVEYIKSRGVNPNN), 298-324 (ILYQLLLIACEYGYYSMTMYLIKAGIK), and 325-357 (PTNSCLKIACKNNKFNIVKLITKYPKTRLDINV).

The chain is Putative ankyrin repeat protein L72 from Acanthamoeba polyphaga (Amoeba).